Consider the following 69-residue polypeptide: Beta-defensin 43 (69 aa).

A signal peptide spans Met1–Ser22. Disulfide bonds link Cys29–Cys56 and Cys35–Cys49.

This sequence belongs to the beta-defensin family.

It is found in the secreted. In terms of biological role, has bactericidal activity. The sequence is that of Beta-defensin 43 (Defb43) from Mus musculus (Mouse).